Reading from the N-terminus, the 387-residue chain is EARP-interacting protein homolog (387 aa).

4 WD repeats span residues 132-172 (SAHG…AKAT), 182-222 (KGQL…QIYC), 226-266 (AHGQ…EPVK), and 270-310 (EHSH…SEPF). The interval 309-337 (PFGHLVDDDDLSDPEENQQEDKGKEPLQD) is disordered. The segment covering 315 to 326 (DDDDLSDPEENQ) has biased composition (acidic residues). One copy of the WD 5 repeat lies at 345–385 (EHEDSVYAVEWSAADPWLFASLSYDGRLVINRVPRALKYRI).

The protein belongs to the WD repeat EIPR1 family.

The protein localises to the golgi apparatus. The protein resides in the trans-Golgi network. May act as a component of endosomal retrieval machinery that is involved in protein transport from early endosomes to either recycling endosomes or the trans-Golgi network. This chain is EARP-interacting protein homolog, found in Danio rerio (Zebrafish).